A 164-amino-acid polypeptide reads, in one-letter code: S-ribosylhomocysteine lyase (164 aa).

Fe cation contacts are provided by His-61, His-65, and Cys-131.

The protein belongs to the LuxS family. As to quaternary structure, homodimer. Requires Fe cation as cofactor.

The catalysed reaction is S-(5-deoxy-D-ribos-5-yl)-L-homocysteine = (S)-4,5-dihydroxypentane-2,3-dione + L-homocysteine. In terms of biological role, involved in the synthesis of autoinducer 2 (AI-2) which is secreted by bacteria and is used to communicate both the cell density and the metabolic potential of the environment. The regulation of gene expression in response to changes in cell density is called quorum sensing. Catalyzes the transformation of S-ribosylhomocysteine (RHC) to homocysteine (HC) and 4,5-dihydroxy-2,3-pentadione (DPD). The polypeptide is S-ribosylhomocysteine lyase (Bifidobacterium longum (strain NCC 2705)).